We begin with the raw amino-acid sequence, 296 residues long: Probable DNA-directed RNA polymerase III subunit RPC6 (296 aa).

Belongs to the eukaryotic RPC34/RPC39 RNA polymerase subunit family.

It is found in the nucleus. In terms of biological role, DNA-dependent RNA polymerase catalyzes the transcription of DNA into RNA using the four ribonucleoside triphosphates as substrates. Specific peripheric component of RNA polymerase III which synthesizes small RNAs, such as 5S rRNA and tRNAs. The sequence is that of Probable DNA-directed RNA polymerase III subunit RPC6 from Caenorhabditis elegans.